The primary structure comprises 353 residues: DNA polymerase IV (353 aa).

The UmuC domain maps to 14–198; that stretch reads IIHIDMDAFF…MDISKFHGVG (185 aa). 2 residues coordinate Mg(2+): Asp-18 and Asp-116. Residue Glu-117 is part of the active site.

It belongs to the DNA polymerase type-Y family. As to quaternary structure, monomer. Mg(2+) serves as cofactor.

It localises to the cytoplasm. The catalysed reaction is DNA(n) + a 2'-deoxyribonucleoside 5'-triphosphate = DNA(n+1) + diphosphate. Functionally, poorly processive, error-prone DNA polymerase involved in untargeted mutagenesis. Copies undamaged DNA at stalled replication forks, which arise in vivo from mismatched or misaligned primer ends. These misaligned primers can be extended by PolIV. Exhibits no 3'-5' exonuclease (proofreading) activity. May be involved in translesional synthesis, in conjunction with the beta clamp from PolIII. In Streptococcus pneumoniae serotype 4 (strain ATCC BAA-334 / TIGR4), this protein is DNA polymerase IV.